Reading from the N-terminus, the 399-residue chain is S-adenosylmethionine synthase (399 aa).

Histidine 16 contacts ATP. A Mg(2+)-binding site is contributed by aspartate 18. Glutamate 44 contributes to the K(+) binding site. Glutamate 57 and glutamine 100 together coordinate L-methionine. The tract at residues 100 to 110 is flexible loop; that stretch reads QSSDIAQGVNE. Residues 177–179, 244–245, aspartate 253, 259–260, alanine 276, and lysine 280 contribute to the ATP site; these read DAK, RF, and RK. Aspartate 253 lines the L-methionine pocket. Lysine 284 lines the L-methionine pocket.

Belongs to the AdoMet synthase family. Homotetramer; dimer of dimers. Requires Mg(2+) as cofactor. The cofactor is K(+).

The protein localises to the cytoplasm. It carries out the reaction L-methionine + ATP + H2O = S-adenosyl-L-methionine + phosphate + diphosphate. It participates in amino-acid biosynthesis; S-adenosyl-L-methionine biosynthesis; S-adenosyl-L-methionine from L-methionine: step 1/1. Its function is as follows. Catalyzes the formation of S-adenosylmethionine (AdoMet) from methionine and ATP. The overall synthetic reaction is composed of two sequential steps, AdoMet formation and the subsequent tripolyphosphate hydrolysis which occurs prior to release of AdoMet from the enzyme. The chain is S-adenosylmethionine synthase from Lactococcus lactis subsp. cremoris (strain MG1363).